The primary structure comprises 146 residues: SsrA-binding protein (146 aa).

Positions 127 to 139 (KRQTIKDRDNSRE) are enriched in basic and acidic residues. The tract at residues 127–146 (KRQTIKDRDNSREARKHIRV) is disordered.

The protein belongs to the SmpB family.

The protein resides in the cytoplasm. Functionally, required for rescue of stalled ribosomes mediated by trans-translation. Binds to transfer-messenger RNA (tmRNA), required for stable association of tmRNA with ribosomes. tmRNA and SmpB together mimic tRNA shape, replacing the anticodon stem-loop with SmpB. tmRNA is encoded by the ssrA gene; the 2 termini fold to resemble tRNA(Ala) and it encodes a 'tag peptide', a short internal open reading frame. During trans-translation Ala-aminoacylated tmRNA acts like a tRNA, entering the A-site of stalled ribosomes, displacing the stalled mRNA. The ribosome then switches to translate the ORF on the tmRNA; the nascent peptide is terminated with the 'tag peptide' encoded by the tmRNA and targeted for degradation. The ribosome is freed to recommence translation, which seems to be the essential function of trans-translation. This chain is SsrA-binding protein, found in Malacoplasma penetrans (strain HF-2) (Mycoplasma penetrans).